The chain runs to 397 residues: uncharacterized protein (397 aa).

12 helical membrane-spanning segments follow: residues 5–25 (LKIL…LWPL), 43–63 (LVLM…GFLF), 69–89 (FKSI…LVFF), 92–112 (WPAY…VFPA), 131–151 (AIYV…GVVA), 157–177 (YVFL…YFGF), 202–222 (FAAL…YSQW), 233–253 (IGIS…LIVL), 269–289 (LKAQ…MLLT), 293–313 (FPMF…VWPA), 333–353 (FVNS…GVLV), and 360–380 (ALVL…LLYD).

This sequence belongs to the major facilitator superfamily.

Its subcellular location is the cell membrane. This is an uncharacterized protein from Bacillus subtilis (strain 168).